The chain runs to 463 residues: Quinolone resistance protein NorB (463 aa).

14 consecutive transmembrane segments (helical) span residues 17–37, 53–73, 86–106, 107–127, 142–162, 165–185, 201–221, 230–250, 273–293, 299–319, 334–354, 357–377, 403–423, and 435–455; these read IGIV…VNVV, IAVS…GGLA, IILN…LLLI, IGRL…LSII, YWSI…GAVA, LGWR…LFLI, FDIK…ILIT, SLLF…FIVL, TASN…NTFV, YSSL…LIMI, PMLI…LTFL, ILYV…LGIY, MASA…YAIV, and IALW…LLLV.

This sequence belongs to the major facilitator superfamily. TCR/Tet family.

It localises to the cell membrane. Its function is as follows. Multidrug efflux pump that acts independently of NorA and is one of the factors that confers resistance against diverse quinolones and chemical compounds. In Staphylococcus aureus (strain MSSA476), this protein is Quinolone resistance protein NorB (norB).